Reading from the N-terminus, the 1386-residue chain is Pleckstrin homology domain-containing family G member 2 (1386 aa).

Disordered regions lie at residues 1–21 (MPEGAQGLSLSKPSPSLGCGR) and 36–82 (TAPA…PLPG). 2 stretches are compositionally biased toward low complexity: residues 8–17 (LSLSKPSPSL) and 45–62 (SPRGSGSSTSLSTVGSEG). Position 90 is a phosphoserine (serine 90). The DH domain maps to 102-283 (RLERVAREIV…TAVAWYINDM (182 aa)). The PH domain maps to 313-411 (ELVLEGAFRG…WIHCLQRLFF (99 aa)). 5 disordered regions span residues 436–540 (KSKP…PSGT), 554–612 (GLRD…PSPL), 701–739 (EPAEAPATRRELFSGSNPGKLGEPPSGGKAGPEEDEEGV), 790–815 (ILEDSDLGGDSGSGKAGAPSSERTAS), and 829–859 (QQMQRAETRASANAPRRRPRVLAQPQPSPCL). Threonine 445 carries the phosphothreonine modification. 2 positions are modified to phosphoserine: serine 450 and serine 469. Over residues 592–603 (SEEEEEEEEGLE) the composition is skewed to acidic residues. 2 positions are modified to phosphoserine: serine 911 and serine 1049. 2 disordered regions span residues 1037–1099 (PVPK…PLPC) and 1162–1191 (TSPKQGSLPDIQGPAAAPPLPEPSLTDTQV). 2 stretches are compositionally biased toward polar residues: residues 1048-1059 (ESPTNIPLTKQG) and 1073-1086 (QPIQPLSWHGSSLD). Threonine 1257 is subject to Phosphothreonine. A phosphoserine mark is found at serine 1261 and serine 1310. 2 disordered regions span residues 1291–1333 (ARRQ…ARRL) and 1367–1386 (TQESMGLHRAQGAPDAPFHM). The segment covering 1301 to 1317 (PAASRGSWSSAPTSRAS) has biased composition (low complexity). The segment covering 1318 to 1330 (SPPPQPQPPPPPA) has biased composition (pro residues).

In terms of biological role, may be a transforming oncogene with exchange activity for CDC42. May be a guanine-nucleotide exchange factor (GEF) for RAC1 and CDC42. Activated by the binding to subunits beta and gamma of the heterotrimeric guanine nucleotide-binding protein (G protein). Involved in the regulation of actin polymerization. The protein is Pleckstrin homology domain-containing family G member 2 (PLEKHG2) of Homo sapiens (Human).